The chain runs to 1161 residues: DNA-directed RNA polymerase 132 kDa polypeptide (1161 aa).

Belongs to the RNA polymerase beta chain family. In terms of assembly, the DNA-dependent RNA polymerase used for intermediate and late genes expression consists of eight subunits (147) kDa, (133) kDa, (35) kDa, (30) kDa, (22) kDa, (19) kDa, (18) kDa and (7) kDa totalling more than 500 kDa in mass. The same holoenzyme, with the addition of the transcription-specificity factor RAP94, is used for early gene expression.

The protein localises to the virion. The catalysed reaction is RNA(n) + a ribonucleoside 5'-triphosphate = RNA(n+1) + diphosphate. Part of the DNA-dependent RNA polymerase which catalyzes the transcription of viral DNA into RNA using the four ribonucleoside triphosphates as substrates. Responsible for the transcription of early, intermediate and late genes. DNA-dependent RNA polymerase associates with the early transcription factor (ETF), itself composed of D6 and A7, thereby allowing the early genes transcription. Late transcription, and probably also intermediate transcription, require newly synthesized RNA polymerase. In Fowlpox virus (strain NVSL) (FPV), this protein is DNA-directed RNA polymerase 132 kDa polypeptide (RPO132).